The following is a 311-amino-acid chain: Sulfate adenylyltransferase subunit 2 (311 aa).

This sequence belongs to the PAPS reductase family. CysD subfamily. In terms of assembly, heterodimer composed of CysD, the smaller subunit, and CysN.

It catalyses the reaction sulfate + ATP + H(+) = adenosine 5'-phosphosulfate + diphosphate. It participates in sulfur metabolism; hydrogen sulfide biosynthesis; sulfite from sulfate: step 1/3. In terms of biological role, with CysN forms the ATP sulfurylase (ATPS) that catalyzes the adenylation of sulfate producing adenosine 5'-phosphosulfate (APS) and diphosphate, the first enzymatic step in sulfur assimilation pathway. APS synthesis involves the formation of a high-energy phosphoric-sulfuric acid anhydride bond driven by GTP hydrolysis by CysN coupled to ATP hydrolysis by CysD. The chain is Sulfate adenylyltransferase subunit 2 from Caulobacter vibrioides (strain ATCC 19089 / CIP 103742 / CB 15) (Caulobacter crescentus).